The following is a 141-amino-acid chain: Envelope glycoprotein L (141 aa).

The N-terminal stretch at 1-19 (MKWLLGAYVCLCLANILNA) is a signal peptide. Positions 21 to 131 (IPNPCCNVFA…TSAIKFKSKY (111 aa)) are interaction with gH.

Belongs to the herpesviridae glycoprotein L family. Interacts with glycoprotein H (gH); this interaction is necessary for the correct processing and cell surface expression of gH. The heterodimer gH/gL seems to interact with gB trimers during fusion.

The protein localises to the virion membrane. The protein resides in the host cell membrane. Its subcellular location is the host Golgi apparatus. It localises to the host trans-Golgi network. Its function is as follows. The heterodimer glycoprotein H-glycoprotein L is required for the fusion of viral and plasma membranes leading to virus entry into the host cell. Acts as a functional inhibitor of gH and maintains gH in an inhibited form. Upon binding to host integrins, gL dissociates from gH leading to activation of the viral fusion glycoproteins gB and gH. In Saimiriine herpesvirus 2 (strain 11) (SaHV-2), this protein is Envelope glycoprotein L.